We begin with the raw amino-acid sequence, 230 residues long: Large ribosomal subunit protein uL1 (230 aa).

Belongs to the universal ribosomal protein uL1 family. As to quaternary structure, part of the 50S ribosomal subunit.

Functionally, binds directly to 23S rRNA. The L1 stalk is quite mobile in the ribosome, and is involved in E site tRNA release. In terms of biological role, protein L1 is also a translational repressor protein, it controls the translation of the L11 operon by binding to its mRNA. This Limosilactobacillus fermentum (strain NBRC 3956 / LMG 18251) (Lactobacillus fermentum) protein is Large ribosomal subunit protein uL1.